Consider the following 345-residue polypeptide: Tetraacyldisaccharide 4'-kinase (345 aa).

Residue 61–68 (TAGGTGKT) participates in ATP binding.

This sequence belongs to the LpxK family.

The enzyme catalyses a lipid A disaccharide + ATP = a lipid IVA + ADP + H(+). It participates in glycolipid biosynthesis; lipid IV(A) biosynthesis; lipid IV(A) from (3R)-3-hydroxytetradecanoyl-[acyl-carrier-protein] and UDP-N-acetyl-alpha-D-glucosamine: step 6/6. Functionally, transfers the gamma-phosphate of ATP to the 4'-position of a tetraacyldisaccharide 1-phosphate intermediate (termed DS-1-P) to form tetraacyldisaccharide 1,4'-bis-phosphate (lipid IVA). The sequence is that of Tetraacyldisaccharide 4'-kinase from Xanthomonas axonopodis pv. citri (strain 306).